The sequence spans 354 residues: Thymidylate synthase (354 aa).

A disordered region spans residues 1-32 (MPAAGSEPSRPPSPPGVQEQSAEPRPPPPPHG). Arg53 provides a ligand contact to dUMP. Ser117 bears the Phosphoserine mark. 178-179 (RR) serves as a coordination point for dUMP. Cys198 functions as the Nucleophile in the catalytic mechanism. DUMP-binding positions include 218–221 (RSGD), Asn229, and 259–261 (HIY). A (6R)-5,10-methylene-5,6,7,8-tetrahydrofolate-binding site is contributed by Asp221. Residue Lys349 forms a Glycyl lysine isopeptide (Lys-Gly) (interchain with G-Cter in SUMO2) linkage. A (6R)-5,10-methylene-5,6,7,8-tetrahydrofolate-binding site is contributed by Ala353.

Belongs to the thymidylate synthase family. As to quaternary structure, homodimer.

It is found in the nucleus. The protein localises to the cytoplasm. Its subcellular location is the mitochondrion. The protein resides in the mitochondrion matrix. It localises to the mitochondrion inner membrane. It catalyses the reaction dUMP + (6R)-5,10-methylene-5,6,7,8-tetrahydrofolate = 7,8-dihydrofolate + dTMP. Its pathway is pyrimidine metabolism; dTTP biosynthesis. Its function is as follows. Catalyzes the reductive methylation of 2'-deoxyuridine 5'-monophosphate (dUMP) to thymidine 5'-monophosphate (dTMP), using the cosubstrate, 5,10- methylenetetrahydrofolate (CH2H4folate) as a 1-carbon donor and reductant and contributes to the de novo mitochondrial thymidylate biosynthesis pathway. This is Thymidylate synthase (TYMS) from Bos taurus (Bovine).